The sequence spans 267 residues: 5'-nucleotidase SurE (267 aa).

Aspartate 9, aspartate 10, serine 40, and asparagine 97 together coordinate a divalent metal cation.

It belongs to the SurE nucleotidase family. A divalent metal cation serves as cofactor.

The protein resides in the cytoplasm. It catalyses the reaction a ribonucleoside 5'-phosphate + H2O = a ribonucleoside + phosphate. In terms of biological role, nucleotidase that shows phosphatase activity on nucleoside 5'-monophosphates. In Helicobacter pylori (strain P12), this protein is 5'-nucleotidase SurE.